Here is a 180-residue protein sequence, read N- to C-terminus: MRILGIDPGLRVTGFGVIDVSGHRLAYVASGVIRTPTADLATRLGTIFQGVSTLVREHAPDQAAIEQVFVNVNPQSTLLLGQARGAAICGLVAGGLPVAEYTALQLKQAVVGYGRATKSQMQEMVTRLLNLSGQPGSDAADALGMAICHAHSGNTLGTISGLAPALARKGLRVRRGRLVG.

Catalysis depends on residues aspartate 7, glutamate 66, and aspartate 138. Residues aspartate 7, glutamate 66, and aspartate 138 each contribute to the Mg(2+) site.

This sequence belongs to the RuvC family. As to quaternary structure, homodimer which binds Holliday junction (HJ) DNA. The HJ becomes 2-fold symmetrical on binding to RuvC with unstacked arms; it has a different conformation from HJ DNA in complex with RuvA. In the full resolvosome a probable DNA-RuvA(4)-RuvB(12)-RuvC(2) complex forms which resolves the HJ. Mg(2+) is required as a cofactor.

It is found in the cytoplasm. It catalyses the reaction Endonucleolytic cleavage at a junction such as a reciprocal single-stranded crossover between two homologous DNA duplexes (Holliday junction).. The RuvA-RuvB-RuvC complex processes Holliday junction (HJ) DNA during genetic recombination and DNA repair. Endonuclease that resolves HJ intermediates. Cleaves cruciform DNA by making single-stranded nicks across the HJ at symmetrical positions within the homologous arms, yielding a 5'-phosphate and a 3'-hydroxyl group; requires a central core of homology in the junction. The consensus cleavage sequence is 5'-(A/T)TT(C/G)-3'. Cleavage occurs on the 3'-side of the TT dinucleotide at the point of strand exchange. HJ branch migration catalyzed by RuvA-RuvB allows RuvC to scan DNA until it finds its consensus sequence, where it cleaves and resolves the cruciform DNA. In Burkholderia vietnamiensis (strain G4 / LMG 22486) (Burkholderia cepacia (strain R1808)), this protein is Crossover junction endodeoxyribonuclease RuvC.